Reading from the N-terminus, the 157-residue chain is Tripartite terminase subunit 2 (157 aa).

The segment at 1-69 (MSWAKQRVPF…DGEDGHALPD (69 aa)) is disordered. Residues 11–27 (LDDDDGEEENDVQDDVD) are compositionally biased toward acidic residues.

Belongs to the herpesviridae TRM2 protein family. In terms of assembly, associates with TRM1 and TRM3 to form the tripartite terminase complex.

The protein resides in the host nucleus. Its function is as follows. Component of the molecular motor that translocates viral genomic DNA in empty capsid during DNA packaging. Forms a tripartite terminase complex together with TRM1 and TRM3 in the host cytoplasm. Once the complex reaches the host nucleus, it interacts with the capsid portal vertex. This portal forms a ring in which genomic DNA is translocated into the capsid. The polypeptide is Tripartite terminase subunit 2 (Homo sapiens (Human)).